The primary structure comprises 853 residues: Trimethylguanosine synthase (853 aa).

The disordered stretch occupies residues 53–80 (NNSGDQATEEEEGGYSCGTAESHDSKGI). Serine 55 carries the phosphoserine modification. At threonine 60 the chain carries Phosphothreonine. A phosphoserine mark is found at serine 85, serine 89, serine 96, and serine 141. Position 146 is a phosphotyrosine (tyrosine 146). A disordered region spans residues 149 to 187 (DDILASDDPSSIEQYENTRTYELQSKKDTETENPPVENT). At serine 154 the chain carries Phosphoserine. Residues 156–171 (DPSSIEQYENTRTYEL) show a composition bias toward polar residues. Serine 189 is modified (phosphoserine). Disordered stretches follow at residues 334-461 (SQLD…GGIP) and 527-632 (DEEA…KKVN). The segment covering 367–382 (NGGTNEESNSSGNTNT) has biased composition (low complexity). Phosphoserine is present on residues serine 412, serine 438, and serine 578. The segment covering 431-442 (DIDENPASDFDD) has biased composition (acidic residues). The segment covering 564-578 (ETNNPEPEKCQSVSS) has biased composition (polar residues). A compositionally biased stretch (basic and acidic residues) spans 608-619 (PDSRQAETEAEV). Over residues 620–630 (KKKKNKKKNKK) the composition is skewed to basic residues. The interval 631-846 (VNGLPPEIAA…TITAYFGDLI (216 aa)) is sufficient for catalytic activity. Aspartate 719 is a binding site for S-adenosyl-L-methionine. Residue tryptophan 766 participates in N(7)-methylguanosine binding.

It belongs to the methyltransferase superfamily. Trimethylguanosine synthase family. In terms of assembly, may form homooligomers. Interacts with CREBBP/CBP, EED/WAIT1, EP300/P300, NCOA6/PRIP, PPARBP/PBP and SMN. As to expression, ubiquitously expressed. High expression in heart, skeletal muscle, kidney, liver and placenta.

The protein localises to the cytoplasm. Its subcellular location is the nucleus. It localises to the cajal body. It is found in the nucleolus. The enzyme catalyses a 5'-end (N(7)-methyl 5'-triphosphoguanosine)-ribonucleoside in snRNA + S-adenosyl-L-methionine = a 5'-end (N(2),N(7)-dimethyl 5'-triphosphoguanosine)-ribonucleoside in snRNA + S-adenosyl-L-homocysteine + H(+). It carries out the reaction a 5'-end (N(7)-methyl 5'-triphosphoguanosine)-ribonucleoside in snoRNA + S-adenosyl-L-methionine = a 5'-end (N(2),N(7)-dimethyl 5'-triphosphoguanosine)-ribonucleoside in snoRNA + S-adenosyl-L-homocysteine + H(+). It catalyses the reaction a 5'-end (N(2),N(7)-dimethyl 5'-triphosphoguanosine)-ribonucleoside in snRNA + S-adenosyl-L-methionine = a 5'-end (N(2),N(2),N(7)-trimethyl 5'-triphosphoguanosine)-ribonucleoside in snRNA + S-adenosyl-L-homocysteine + H(+). The catalysed reaction is a 5'-end (N(2),N(7)-dimethyl 5'-triphosphoguanosine)-ribonucleoside in snoRNA + S-adenosyl-L-methionine = a 5'-end (N(2),N(2),N(7)-trimethyl 5'-triphosphoguanosine)-ribonucleoside in snoRNA + S-adenosyl-L-homocysteine + H(+). Catalyzes the 2 serial methylation steps for the conversion of the 7-monomethylguanosine (m(7)G) caps of snRNAs and snoRNAs to a 2,2,7-trimethylguanosine (m(2,2,7)G) cap structure. The enzyme is specific for guanine, and N7 methylation must precede N2 methylation. Hypermethylation of the m7G cap of U snRNAs leads to their concentration in nuclear foci, their colocalization with coilin and the formation of canonical Cajal bodies (CBs). Plays a role in transcriptional regulation. In Homo sapiens (Human), this protein is Trimethylguanosine synthase (TGS1).